We begin with the raw amino-acid sequence, 188 residues long: Pyridoxal 5'-phosphate synthase subunit PdxT (188 aa).

47–49 (GES) lines the L-glutamine pocket. The Nucleophile role is filled by Cys-79. L-glutamine is bound by residues Arg-105 and 134 to 135 (IR). Active-site charge relay system residues include His-170 and Glu-172.

Belongs to the glutaminase PdxT/SNO family. In the presence of PdxS, forms a dodecamer of heterodimers. Only shows activity in the heterodimer.

It carries out the reaction aldehydo-D-ribose 5-phosphate + D-glyceraldehyde 3-phosphate + L-glutamine = pyridoxal 5'-phosphate + L-glutamate + phosphate + 3 H2O + H(+). It catalyses the reaction L-glutamine + H2O = L-glutamate + NH4(+). Its pathway is cofactor biosynthesis; pyridoxal 5'-phosphate biosynthesis. Functionally, catalyzes the hydrolysis of glutamine to glutamate and ammonia as part of the biosynthesis of pyridoxal 5'-phosphate. The resulting ammonia molecule is channeled to the active site of PdxS. The polypeptide is Pyridoxal 5'-phosphate synthase subunit PdxT (Listeria monocytogenes serotype 4a (strain HCC23)).